The following is a 347-amino-acid chain: DNA-directed RNA polymerase subunit alpha (347 aa).

The segment at 1–243 (MLIKQGERLI…DQISVFINFD (243 aa)) is alpha N-terminal domain (alpha-NTD). The interval 260-347 (VNEHLFKSID…EWKRKQQNEA (88 aa)) is alpha C-terminal domain (alpha-CTD).

This sequence belongs to the RNA polymerase alpha chain family. Homodimer. The RNAP catalytic core consists of 2 alpha, 1 beta, 1 beta' and 1 omega subunit. When a sigma factor is associated with the core the holoenzyme is formed, which can initiate transcription.

The catalysed reaction is RNA(n) + a ribonucleoside 5'-triphosphate = RNA(n+1) + diphosphate. Functionally, DNA-dependent RNA polymerase catalyzes the transcription of DNA into RNA using the four ribonucleoside triphosphates as substrates. This chain is DNA-directed RNA polymerase subunit alpha, found in Desulfovibrio desulfuricans (strain ATCC 27774 / DSM 6949 / MB).